The primary structure comprises 467 residues: uncharacterized protein (467 aa).

Sel1-like repeat units lie at residues 38–73 (PAAA…EQGH), 107–138 (PEAQ…KNNN), 139–172 (PHGQ…AQGL), 173–208 (PEAH…QQGY), 240–275 (PDAH…AERH), 276–311 (PEGL…EAGS), 343–378 (AERL…ELGH), 379–414 (SKAQ…AKKD), and 415–450 (SMAF…NNGY).

This is an uncharacterized protein from Neisseria meningitidis serogroup B (strain ATCC BAA-335 / MC58).